A 439-amino-acid chain; its full sequence is Glycosyl hydrolase DigH (439 aa).

The first 27 residues, 1–27 (MDICSRNEKLAIRRPAILVALALLLCS), serve as a signal peptide directing secretion. Residue C28 is the site of N-palmitoyl cysteine attachment. C28 is lipidated: S-diacylglycerol cysteine. Residues 34-54 (ESMVTPPAGSKPPATTQQSSQ) are disordered.

This sequence belongs to the glycosyl hydrolase-like 10 (GHL10) family.

It is found in the cell outer membrane. Its function is as follows. Divisome-localized glycosyl hydrolase that cleaves peptide-free (denuded) peptidoglycans. This Escherichia coli O6:H1 (strain CFT073 / ATCC 700928 / UPEC) protein is Glycosyl hydrolase DigH.